The sequence spans 462 residues: Squalene synthase LSS (462 aa).

NADP(+)-binding residues include R48 and R73. 3 residues coordinate Mg(2+): D76, E79, and D80. Residues R214, K314, and R316 each contribute to the NADP(+) site. Transmembrane regions (helical) follow at residues 399–419 and 436–456; these read LVLV…PLLW and LGLP…YQVF.

It belongs to the phytoene/squalene synthase family. Mg(2+) is required as a cofactor.

It is found in the membrane. The enzyme catalyses 2 (2E,6E)-farnesyl diphosphate + NADH + H(+) = squalene + 2 diphosphate + NAD(+). It catalyses the reaction 2 (2E,6E)-farnesyl diphosphate + NADPH + H(+) = squalene + 2 diphosphate + NADP(+). Functionally, converts farnesyl diphosphate (FPP) into squalene, a precursor for sterol biosynthesis in eukaryotes. This Botryococcus braunii (Green alga) protein is Squalene synthase LSS.